We begin with the raw amino-acid sequence, 236 residues long: ATP synthase subunit a (236 aa).

Transmembrane regions (helical) follow at residues 17–37 (WTNLISGTIVFVITFFLLFGL), 76–96 (SFFVFVLFVFLFISNQLGLII), 113–133 (PVVTMTLALCAVTLSHFAGVA), 170–190 (IFGNIYAGELLLKLLAGMAFS), and 196–216 (MIVSLPLEIIWQGFSVFIGAI).

Belongs to the ATPase A chain family. F-type ATPases have 2 components, CF(1) - the catalytic core - and CF(0) - the membrane proton channel. CF(1) has five subunits: alpha(3), beta(3), gamma(1), delta(1), epsilon(1). CF(0) has three main subunits: a(1), b(2) and c(9-12). The alpha and beta chains form an alternating ring which encloses part of the gamma chain. CF(1) is attached to CF(0) by a central stalk formed by the gamma and epsilon chains, while a peripheral stalk is formed by the delta and b chains.

Its subcellular location is the cell membrane. Key component of the proton channel; it plays a direct role in the translocation of protons across the membrane. The protein is ATP synthase subunit a of Limosilactobacillus fermentum (strain NBRC 3956 / LMG 18251) (Lactobacillus fermentum).